A 139-amino-acid polypeptide reads, in one-letter code: MRIMGLDVGSKTVGVAISDPLGFTAQGLEIIQINEDQEEFGFERLGELVAEYKVDKFVIGLPKNMNNTSGPRVEASQAYGAKVTELFGLPVEYQDERLTTVAAERMLIEQADVSRNKRKKVIDKLAAQLILQNYLDRNY.

Belongs to the YqgF nuclease family.

The protein resides in the cytoplasm. In terms of biological role, could be a nuclease involved in processing of the 5'-end of pre-16S rRNA. The polypeptide is Putative pre-16S rRNA nuclease (Streptococcus gordonii (strain Challis / ATCC 35105 / BCRC 15272 / CH1 / DL1 / V288)).